We begin with the raw amino-acid sequence, 930 residues long: Serine/threonine-protein kinase PknD (930 aa).

The 288-residue stretch at 4 to 291 (YDIIRMIGKG…ALKADIEQHL (288 aa)) folds into the Protein kinase domain. Residues 10-18 (IGKGGMGEV) and Lys-33 contribute to the ATP site. The active-site Proton acceptor is the Asp-138.

This sequence belongs to the protein kinase superfamily. Ser/Thr protein kinase family. Autophosphorylated on serine and threonine residues.

The catalysed reaction is L-seryl-[protein] + ATP = O-phospho-L-seryl-[protein] + ADP + H(+). It carries out the reaction L-threonyl-[protein] + ATP = O-phospho-L-threonyl-[protein] + ADP + H(+). Its function is as follows. Together with the serine/threonine kinase Pkn1, may play a role in the specific interactions with host proteins during intracellular growth. This is Serine/threonine-protein kinase PknD from Chlamydia caviae (strain ATCC VR-813 / DSM 19441 / 03DC25 / GPIC) (Chlamydophila caviae).